Here is a 313-residue protein sequence, read N- to C-terminus: tRNA dimethylallyltransferase (313 aa).

ATP is bound at residue 17 to 24 (GPTASGKT). 19-24 (TASGKT) contacts substrate. 4 interaction with substrate tRNA regions span residues 42-45 (DSAL), 166-170 (QRLSR), 247-252 (RCVGYR), and 280-287 (KRQITWLR).

Belongs to the IPP transferase family. As to quaternary structure, monomer. It depends on Mg(2+) as a cofactor.

The enzyme catalyses adenosine(37) in tRNA + dimethylallyl diphosphate = N(6)-dimethylallyladenosine(37) in tRNA + diphosphate. Its function is as follows. Catalyzes the transfer of a dimethylallyl group onto the adenine at position 37 in tRNAs that read codons beginning with uridine, leading to the formation of N6-(dimethylallyl)adenosine (i(6)A). The sequence is that of tRNA dimethylallyltransferase from Photorhabdus laumondii subsp. laumondii (strain DSM 15139 / CIP 105565 / TT01) (Photorhabdus luminescens subsp. laumondii).